The sequence spans 331 residues: Adenosine deaminase (331 aa).

2 residues coordinate Zn(2+): H12 and H14. Positions 14, 16, and 170 each coordinate substrate. H197 is a Zn(2+) binding site. E200 serves as the catalytic Proton donor. D278 contacts Zn(2+). D279 contacts substrate.

This sequence belongs to the metallo-dependent hydrolases superfamily. Adenosine and AMP deaminases family. Adenosine deaminase subfamily. The cofactor is Zn(2+).

It carries out the reaction adenosine + H2O + H(+) = inosine + NH4(+). The catalysed reaction is 2'-deoxyadenosine + H2O + H(+) = 2'-deoxyinosine + NH4(+). In terms of biological role, catalyzes the hydrolytic deamination of adenosine and 2-deoxyadenosine. The chain is Adenosine deaminase from Shewanella loihica (strain ATCC BAA-1088 / PV-4).